We begin with the raw amino-acid sequence, 219 residues long: Response regulator ArlR (219 aa).

Positions 3–116 (QILIVEDEQN…ELLARIRAIL (114 aa)) constitute a Response regulatory domain. At Asp-52 the chain carries 4-aspartylphosphate. The segment at residues 122 to 219 (KDIIDVNGIT…TVRGVGYVIR (98 aa)) is a DNA-binding region (ompR/PhoB-type).

In terms of processing, phosphorylated by ArlS.

It is found in the cytoplasm. Its function is as follows. Member of the two-component regulatory system ArlS/ArlR involved in the regulation of adhesion, autolysis, multidrug resistance and virulence. The sequence is that of Response regulator ArlR (arlR) from Staphylococcus aureus (strain USA300).